A 400-amino-acid polypeptide reads, in one-letter code: Unsaturated glucuronyl hydrolase (400 aa).

An N-terminal signal peptide occupies residues Met-1 to Cys-20. Asp-120 functions as the Nucleophile in the catalytic mechanism. Asp-181 serves as the catalytic Proton donor.

This sequence belongs to the glycosyl hydrolase 88 family.

It localises to the cell surface. Its function is as follows. Unsaturated glucuronyl hydrolase involved in ulvan degradation. Ulvan is the main polysaccharide component of the Ulvales (green seaweed) cell wall. It is composed of disaccharide building blocks comprising 3-sulfated rhamnose (Rha3S) linked to D-glucuronic acid (GlcA), L-iduronic acid (IduA), or D-xylose (Xyl). Unsaturated glucuronyl hydrolase catalyzes the cleavage of the unsaturated 4-deoxy-L-threo-hex-4-enopyranosiduronic acid (deltaUA) at the non-reducing end of ulvan oligomers, thus forming 5-dehydro-4-deoxy-D-glucuronate. This is Unsaturated glucuronyl hydrolase from Formosa agariphila (strain DSM 15362 / KCTC 12365 / LMG 23005 / KMM 3901 / M-2Alg 35-1).